The following is an 8886-amino-acid chain: Obscurin (8886 aa).

4 consecutive Ig-like domains span residues P9–D99, P109–D201, P234–S320, and P329–S415. C30 and C81 form a disulfide bridge. Residues S135–S165 are disordered. Basic and acidic residues predominate over residues K144–E164. 2 disulfides stabilise this stretch: C257–C309 and C352–C402. At S393 the chain carries Phosphoserine. Positions P513–M610 constitute a Fibronectin type-III 1 domain. Ig-like domains follow at residues P702–T793, P859–P951, P951–P1043, P1043–P1135, P1135–P1227, P1227–P1319, P1319–D1407, P1411–P1503, P1503–P1595, P1595–P1687, P1687–P1779, P1779–P1871, P1871–P1963, P1963–D2051, T2055–A2147, P2152–A2241, A2242–T2325, P2329–R2415, P2420–N2504, P2598–R2681, P2721–T2812, P2900–T2984, P3078–S3162, P3258–C3342, N3348–L3431, P3527–V3610, P3616–T3700, A3785–T3876, P3881–T3964, P4042–S4125, P4130–S4213, P4219–N4301, P4307–T4389, P4395–S4477, P4483–S4565, P4571–S4653, P4659–S4741, P4746–S4829, P4833–T4916, P4923–S5007, P5013–T5105, L5378–S5464, and P5557–V5659. Disulfide bonds link C885–C935, C977–C1027, C1069–C1119, C1161–C1211, C1253–C1303, C1345–C1395, C1437–C1487, C1529–C1579, C1621–C1671, C1713–C1763, C1805–C1855, C1897–C1947, C1989–C2039, and C2081–C2131. A disulfide bridge links C2263 with C2313. 8 disulfides stabilise this stretch: C2620-C2669, C2743-C2793, C2922-C2972, C3100-C3150, C3280-C3330, C3369-C3419, C3549-C3599, and C3638-C3688. Phosphoserine is present on S3321. S3802 is modified (phosphoserine). Cystine bridges form between C3815–C3864, C3903–C3952, C4064–C4113, C4152–C4201, C4240–C4289, C4328–C4377, C4416–C4465, C4504–C4553, C4592–C4641, C4680–C4729, C4768–C4817, C4856–C4906, C4945–C4995, and C5034–C5086. The residue at position 4960 (S4960) is a Phosphoserine. The region spanning P5471 to A5569 is the Fibronectin type-III 2 domain. C5590 and C5643 form a disulfide bridge. A Phosphoserine modification is found at S5699. A disordered region spans residues R5700–S5736. A Phosphothreonine modification is found at T5703. S5706 is subject to Phosphoserine. Positions E5713–A5724 are enriched in basic and acidic residues. T5737 bears the Phosphothreonine mark. At S5754 the chain carries Phosphoserine. An IQ domain is found at L5821 to S5850. An Ig-like 48 domain is found at P5847–S5930. C5868 and C5920 form a disulfide bridge. The segment at E5977 to D5996 is disordered. 3 Ig-like domains span residues P6077–R6166, P6209–L6298, and P6320–S6416. C6098 and C6150 are joined by a disulfide. The interval K6504–S6546 is disordered. S6512 is modified (phosphoserine). Phosphothreonine is present on T6518. Low complexity predominate over residues P6519–S6538. S6520 and S6522 each carry phosphoserine. The SH3 domain maps to E6549–K6616. A DH domain is found at R6642–K6826. In terms of domain architecture, PH spans E6844 to Q6953. Position 6924 (R6924) interacts with a 1,2-diacyl-sn-glycero-3-phospho-(1D-myo-inositol-4,5-bisphosphate). A 1,2-diacyl-sn-glycero-3-phospho-(1D-myo-inositol-3,4-bisphosphate) is bound at residue R6929. Ig-like domains follow at residues P6963–S7046 and P7057–Y7147. Intrachain disulfides connect C6984-C7036 and C7078-C7131. A disordered region spans residues A7200–W7257. Residues Q7247–W7257 show a composition bias toward polar residues. The 89-residue stretch at P7306–L7394 folds into the Ig-like 54 domain. The region spanning Y7416–F7669 is the Protein kinase 1 domain. Residues I7422–V7430 and K7445 each bind ATP. Residue D7535 is the Proton acceptor of the active site. 3 disordered regions span residues G7717–C7810, E7879–K8106, and S8150–R8180. S7779 is modified (phosphoserine). A compositionally biased stretch (low complexity) spans A7793–P7804. Over residues T7941–F7952 the composition is skewed to basic and acidic residues. Residues S7986–Q7996 show a composition bias toward polar residues. 2 stretches are compositionally biased toward low complexity: residues G8000 to S8014 and G8053 to V8073. S8161 is subject to Phosphoserine. The 85-residue stretch at K8380–T8464 folds into the Ig-like 55 domain. The cysteines at positions 8401 and 8453 are disulfide-linked. Positions P8474 to P8566 constitute a Fibronectin type-III 3 domain. The Protein kinase 2 domain occupies F8590 to L8842. Residues I8596–V8604 and K8619 contribute to the ATP site. The active-site Proton acceptor is D8709.

It belongs to the protein kinase superfamily. CAMK Ser/Thr protein kinase family. Interacts (via protein kinase domain 1) with CDH2 and (via protein kinase domain 1) with ATP1B1. Isoform 2 is found in a complex with DSG2, DESM, GJA1, CDH2 and VCL. Isoform 3 is found in a complex with DSG2, DESM, GJA1, CDH2, ANK3 and VCL. It depends on Mg(2+) as a cofactor. In terms of processing, autophosphorylated by protein kinase domain 1 and 2. Two small isoforms, one probably containing protein kinase domain 2 and a partial protein kinase domain 1 and one containing only protein kinase domain 2, are glycosylated. Expressed in skeletal muscles including flexor digitorum brevis (FDB), soleus and tibialis anterior muscles, and to a lesser extent in heart muscles (at protein level). Isoform 2 and isoform 3 are expressed in the myocardium (at protein level).

It localises to the cytoplasm. The protein localises to the myofibril. The protein resides in the sarcomere. It is found in the m line. Its subcellular location is the z line. It localises to the cell membrane. The protein localises to the sarcolemma. The protein resides in the nucleus. It is found in the secreted. It carries out the reaction L-seryl-[protein] + ATP = O-phospho-L-seryl-[protein] + ADP + H(+). The enzyme catalyses L-threonyl-[protein] + ATP = O-phospho-L-threonyl-[protein] + ADP + H(+). In terms of biological role, structural component of striated muscles which plays a role in myofibrillogenesis. Probably involved in the assembly of myosin into sarcomeric A bands in striated muscle. Has serine/threonine protein kinase activity and phosphorylates N-cadherin CDH2 and sodium/potassium-transporting ATPase subunit ATP1B1. Binds (via the PH domain) strongly to phosphatidylinositol 3,4-bisphosphate (PtdIns(3,4)P2) and phosphatidylinositol 4,5-bisphosphate (PtdIns(4,5)P2), and to a lesser extent to phosphatidylinositol 3-phosphate (PtdIns(3)P), phosphatidylinositol 4-phosphate (PtdIns(4)P), phosphatidylinositol 5-phosphate (PtdIns(5)P) and phosphatidylinositol 3,4,5-trisphosphate (PtdIns(3,4,5)P3). Its function is as follows. Isoform 2 and isoform 3: bind phosphatidylinositol bisphosphates (PIP2s) via their PH domains and negatively regulate the PI3K/AKT/mTOR signaling pathway, thus contributing to the regulation of cardiomyocyte size and adhesion. This Mus musculus (Mouse) protein is Obscurin.